We begin with the raw amino-acid sequence, 106 residues long: uncharacterized protein (106 aa).

The protein belongs to the SUI1 family.

This is an uncharacterized protein from Haemophilus influenzae (strain ATCC 51907 / DSM 11121 / KW20 / Rd).